A 777-amino-acid chain; its full sequence is Transcriptional regulator QRICH1 (777 aa).

Met-1 bears the N-acetylmethionine mark. Positions 6–48 constitute a CARD domain; sequence ENTISFEEYIRVKARSVPQHRMKEFLDSLASKGPEALQEFQQT. 2 disordered regions span residues 140 to 164 and 219 to 240; these read IQGQ…SPSQ and ALSP…VGTA. Phosphoserine is present on Ser-346. Residues Lys-354 and Lys-359 each participate in a glycyl lysine isopeptide (Lys-Gly) (interchain with G-Cter in SUMO2) cross-link. Positions 420–440 are disordered; the sequence is QQQPQQQTAQEQTPPPQQQQQ. Ser-465 carries the post-translational modification Phosphoserine.

In terms of tissue distribution, expressed highly in prefrontal cortex, craniofacial area and near the limbs of mouse embryos. Expressed in heart, skeletal muscle, liver, kidney, lung, brain, spleen, intestine and growth plate in mice.

It localises to the nucleus. The protein resides in the cytoplasm. The protein localises to the cell membrane. Its function is as follows. Transcriptional regulator that acts as a mediator of the integrated stress response (ISR) through transcriptional control of protein homeostasis under conditions of ER stress. Controls the outcome of the unfolded protein response (UPR), an ER-stress response pathway that either promotes recovery of ER homeostasis and cell survival, or triggers the terminal UPR which elicits programmed cell death when ER stress is prolonged and unresolved. ER stress induces QRICH1 translation by a ribosome translation re-initiation mechanism in response to EIF2S1/eIF-2-alpha phosphorylation, and stress-induced QRICH1 regulates a transcriptional program associated with protein translation, protein secretion-mediated proteotoxicity and cell death during the terminal UPR. May cooperate with ATF4 transcription factor signaling to regulate ER homeostasis which is critical for cell viability. Up-regulates CASP3/caspase-3 activity in epithelial cells under ER stress. Central regulator of proteotoxicity associated with ER stress-mediated inflammatory diseases in the intestines and liver. Involved in chondrocyte hypertrophy, a process required for normal longitudinal bone growth. This is Transcriptional regulator QRICH1 from Mus musculus (Mouse).